The chain runs to 209 residues: Ras-like protein (209 aa).

Residue 15–22 (GGGGEGKS) participates in GTP binding. The short motif at 37-45 (YDPTIEESY) is the Effector region element. GTP-binding positions include 62–66 (DTAGQ) and 121–124 (NKCD). Residues Cys202 and Cys203 are each lipidated (S-palmitoyl cysteine). Cys206 is modified (cysteine methyl ester). Cys206 is lipidated: S-geranylgeranyl cysteine. Positions 207–209 (IVM) are cleaved as a propeptide — removed in mature form.

It belongs to the small GTPase superfamily. Ras family.

Its subcellular location is the cell membrane. It carries out the reaction GTP + H2O = GDP + phosphate + H(+). Its activity is regulated as follows. Alternates between an inactive form bound to GDP and an active form bound to GTP. Activated by a guanine nucleotide-exchange factor (GEF) and inactivated by a GTPase-activating protein (GAP). The sequence is that of Ras-like protein from Laccaria bicolor (Bicoloured deceiver).